A 281-amino-acid chain; its full sequence is Probable endonuclease 4 (281 aa).

His67, His107, Glu142, Asp176, His179, His211, Asp224, His226, and Glu256 together coordinate Zn(2+).

Belongs to the AP endonuclease 2 family. Zn(2+) serves as cofactor.

It catalyses the reaction Endonucleolytic cleavage to 5'-phosphooligonucleotide end-products.. Its function is as follows. Endonuclease IV plays a role in DNA repair. It cleaves phosphodiester bonds at apurinic or apyrimidinic (AP) sites, generating a 3'-hydroxyl group and a 5'-terminal sugar phosphate. The chain is Probable endonuclease 4 from Alkaliphilus oremlandii (strain OhILAs) (Clostridium oremlandii (strain OhILAs)).